Consider the following 280-residue polypeptide: NAD(P)H-quinone oxidoreductase subunit K, chloroplastic (280 aa).

[4Fe-4S] cluster is bound by residues C65, C66, C130, and C161. The disordered stretch occupies residues L257–A280.

It belongs to the complex I 20 kDa subunit family. NDH is composed of at least 16 different subunits, 5 of which are encoded in the nucleus. [4Fe-4S] cluster serves as cofactor.

Its subcellular location is the plastid. The protein localises to the chloroplast thylakoid membrane. The enzyme catalyses a plastoquinone + NADH + (n+1) H(+)(in) = a plastoquinol + NAD(+) + n H(+)(out). It carries out the reaction a plastoquinone + NADPH + (n+1) H(+)(in) = a plastoquinol + NADP(+) + n H(+)(out). NDH shuttles electrons from NAD(P)H:plastoquinone, via FMN and iron-sulfur (Fe-S) centers, to quinones in the photosynthetic chain and possibly in a chloroplast respiratory chain. The immediate electron acceptor for the enzyme in this species is believed to be plastoquinone. Couples the redox reaction to proton translocation, and thus conserves the redox energy in a proton gradient. The sequence is that of NAD(P)H-quinone oxidoreductase subunit K, chloroplastic from Staurastrum punctulatum (Green alga).